The primary structure comprises 706 residues: Probable cyclic nucleotide-gated ion channel 3 (706 aa).

The Cytoplasmic portion of the chain corresponds to 1-85 (MMNPQRNKFV…NDSYLQSWNK (85 aa)). The helical transmembrane segment at 86–106 (IFLLLSVVALAFDPLFFYIPY) threads the bilayer. Over 107-119 (VKPERFCLNLDKK) the chain is Extracellular. Residues 120-140 (LQTIACVFRTFIDAFYVVHML) traverse the membrane as a helical segment. Topologically, residues 141–174 (FQFHTGFITPSSSGFGRGELNEKHKDIALRYLGS) are cytoplasmic. A helical transmembrane segment spans residues 175 to 195 (YFLIDLLSILPIPQVVVLAIV). Over 196–208 (PRMRRPASLVAKE) the chain is Extracellular. Residues 209–229 (LLKWVIFCQYVPRIARIYPLF) traverse the membrane as a helical segment. Residues 230-247 (KEVTRTSGLVTETAWAGA) are Cytoplasmic-facing. A helical transmembrane segment spans residues 248-268 (ALNLFLYMLASHVFGSFWYLI). Residues 269-371 (SIERKDRCWR…QNLKTSAFEG (103 aa)) lie on the Extracellular side of the membrane. Residues 372–392 (EIIFAIVICISGLVLFALLIG) form a helical membrane-spanning segment. Residues 393-706 (NMQKYLQSTT…ADPEFPMDET (314 aa)) are Cytoplasmic-facing. A nucleoside 3',5'-cyclic phosphate-binding positions include 477-600 (WFQA…KQLR) and aspartate 548. The interval 591–606 (YRRLHSKQLRHMFRFY) is calmodulin-binding. The IQ domain occupies 611–640 (QTWAACFIQAAWKRHCRRKLSKALREEEGK).

It belongs to the cyclic nucleotide-gated cation channel (TC 1.A.1.5) family. As to quaternary structure, homotetramer or heterotetramer.

Its subcellular location is the cell membrane. Functionally, probable cyclic nucleotide-gated ion channel. In Arabidopsis thaliana (Mouse-ear cress), this protein is Probable cyclic nucleotide-gated ion channel 3 (CNGC3).